A 645-amino-acid polypeptide reads, in one-letter code: 1,4-alpha-glucan branching enzyme GlgB (645 aa).

Asp-309 functions as the Nucleophile in the catalytic mechanism. Residue Glu-352 is the Proton donor of the active site. The segment at Met-621 to Arg-645 is disordered. A compositionally biased stretch (basic and acidic residues) spans Lys-626–Leu-635.

Belongs to the glycosyl hydrolase 13 family. GlgB subfamily. As to quaternary structure, monomer.

It catalyses the reaction Transfers a segment of a (1-&gt;4)-alpha-D-glucan chain to a primary hydroxy group in a similar glucan chain.. The protein operates within glycan biosynthesis; glycogen biosynthesis. Its function is as follows. Catalyzes the formation of the alpha-1,6-glucosidic linkages in glycogen by scission of a 1,4-alpha-linked oligosaccharide from growing alpha-1,4-glucan chains and the subsequent attachment of the oligosaccharide to the alpha-1,6 position. In Bacillus cytotoxicus (strain DSM 22905 / CIP 110041 / 391-98 / NVH 391-98), this protein is 1,4-alpha-glucan branching enzyme GlgB.